Reading from the N-terminus, the 221-residue chain is GTP-binding nuclear protein Ran-3 (221 aa).

The 165-residue stretch at 10–174 (DYPSFKLVIV…LYLARKLAGD (165 aa)) folds into the Small GTPase Ran-type domain. GTP is bound at residue 21 to 28 (DGGTGKTT). Residues 40–48 (KKYEPTIGV) form a switch-I region. GTP contacts are provided by residues glycine 71, 125–128 (NKVD), and 153–155 (SAK). The segment at 71-87 (GQEKFGGLRDGYYIHGQ) is switch-II. A disordered region spans residues 201-221 (EAELAAAASQPLPDDDDDTFE).

It belongs to the small GTPase superfamily. Ran family. As to quaternary structure, found in a nuclear export complex with RanGTP, exportin and pre-miRNA. Interacts with RanBP1a and RanBP1b. Interacts with KPNB1.

Its subcellular location is the nucleus. Functionally, GTP-binding protein involved in nucleocytoplasmic transport. Required for the import of protein into the nucleus and also for RNA export. Involved in chromatin condensation and control of cell cycle. This Arabidopsis thaliana (Mouse-ear cress) protein is GTP-binding nuclear protein Ran-3 (RAN3).